The following is a 99-amino-acid chain: Small integral membrane protein 14 (99 aa).

Topologically, residues 1–49 are lumenal; sequence MAEGGFDPCECVCSHEHAMRRLINLLRQSQSYCTDTECLQELPGPSGDN. Residues 50-70 form a helical membrane-spanning segment; it reads GISVTMILVAWMVIALILFLL. Topologically, residues 71–99 are cytoplasmic; sequence RPPNLRGSNLPGKPTSPHNGQDPPAPPVD. The disordered stretch occupies residues 77 to 99; that stretch reads GSNLPGKPTSPHNGQDPPAPPVD.

It localises to the endoplasmic reticulum membrane. The protein is Small integral membrane protein 14 (SMIM14) of Pongo abelii (Sumatran orangutan).